The following is a 334-amino-acid chain: Flotillin-like protein FloA (334 aa).

The helical transmembrane segment at 3–23 (LYLIFLIVVGVVGLVLVGLFL) threads the bilayer.

It belongs to the flotillin-like FloA family. As to quaternary structure, homooligomerizes.

The protein localises to the cell membrane. It localises to the membrane raft. Functionally, found in functional membrane microdomains (FMM) that may be equivalent to eukaryotic membrane rafts. FMMs are highly dynamic and increase in number as cells age. Flotillins are thought to be important factors in membrane fluidity. This chain is Flotillin-like protein FloA, found in Opitutus terrae (strain DSM 11246 / JCM 15787 / PB90-1).